The following is a 384-amino-acid chain: MSTNTSKTLELFSKKTVQEHNTANDCWVTYQNRKIYDVTRFLSEHPGGDESILDYAGKDITEIMKDSDVHEHSDSAYEILEDEYLIGYLATDEEAARLLTNKNHKVEVQLSADGTEFDSTTFVKELPAEEKLSIATDYSNDYKKHKFLDLNRPLLMQILRSDFKKDFYVDQIHRPRHYGKGSAPLFGNFLEPLTKTAWWVVPVAWLPVVVYHMGVALKNMNQLFACFLFCVGVFVWTLIEYGLHRFLFHFDDWLPESNIAFATHFLLHGCHHYLPMDKYRLVMPPTLFVILCAPFYKLVFALLPLYWAYAGFAGGLFGYVCYDECHFFLHHSKLPPFMRKLKKYHLEHHYKNYQLGFGVTSWFWDEVFGTYLGPDAPLSKMKYE.

The Cytoplasmic portion of the chain corresponds to 1–197 (MSTNTSKTLE…NFLEPLTKTA (197 aa)). Residues 9-90 (LELFSKKTVQ…EDEYLIGYLA (82 aa)) enclose the Cytochrome b5 heme-binding domain. Histidine 45 and histidine 72 together coordinate heme. Residues 198-216 (WWVVPVAWLPVVVYHMGVA) form a helical membrane-spanning segment. Residues 217-221 (LKNMN) lie on the Lumenal side of the membrane. A helical transmembrane segment spans residues 222–246 (QLFACFLFCVGVFVWTLIEYGLHRF). Positions 244, 249, 268, 271, and 272 each coordinate Zn(2+). Residues 247-284 (LFHFDDWLPESNIAFATHFLLHGCHHYLPMDKYRLVMP) are Cytoplasmic-facing. A helical membrane pass occupies residues 285 to 302 (PTLFVILCAPFYKLVFAL). The Lumenal segment spans residues 303 to 304 (LP). Residues 305 to 328 (LYWAYAGFAGGLFGYVCYDECHFF) form a helical membrane-spanning segment. The Zn(2+) site is built by histidine 326, histidine 330, histidine 345, histidine 348, and histidine 349. Over 329–384 (LHHSKLPPFMRKLKKYHLEHHYKNYQLGFGVTSWFWDEVFGTYLGPDAPLSKMKYE) the chain is Cytoplasmic.

This sequence belongs to the sterol desaturase family. SCS7 subfamily. The cofactor is Zn(2+).

It localises to the endoplasmic reticulum membrane. It carries out the reaction an N-(1,2 saturated acyl)-(4R)-hydroxysphinganine + 2 Fe(II)-[cytochrome b5] + O2 + 2 H(+) = an N-(2R-hydroxyacyl)-4R-hydroxysphinganine + 2 Fe(III)-[cytochrome b5] + H2O. It catalyses the reaction an N-(1,2-saturated acyl)sphinganine + 2 Fe(II)-[cytochrome b5] + O2 + 2 H(+) = an N-[(2'R)-hydroxyacyl]sphinganine + 2 Fe(III)-[cytochrome b5] + H2O. The catalysed reaction is N-hexacosanoyl-(4R)-hydroxysphinganine + 2 Fe(II)-[cytochrome b5] + O2 + 2 H(+) = N-(2-hydroxyhexacosanyl)-(4R)-hydroxysphinganine + 2 Fe(III)-[cytochrome b5] + H2O. It participates in sphingolipid metabolism. In terms of biological role, ceramide hydroxylase involved in the hydroxylation of sphingolipid-associated very long chain fatty acids. Postulated to hydroxylate the very long chain fatty acid of dihydroceramides and phytoceramides at C-2. In Saccharomyces cerevisiae (strain ATCC 204508 / S288c) (Baker's yeast), this protein is Ceramide very long chain fatty acid hydroxylase SCS7.